A 385-amino-acid polypeptide reads, in one-letter code: Guanine nucleotide-binding protein alpha-5 subunit (385 aa).

Residue G2 is the site of N-myristoyl glycine attachment. A lipid anchor (S-palmitoyl cysteine) is attached at C6. One can recognise a G-alpha domain in the interval 32-385 (RKIKMLLLGV…GKNYEDTNLE (354 aa)). The G1 motif stretch occupies residues 35–48 (KMLLLGVTDSGKST). GTP-binding positions include 40–47 (GVTDSGKS), 174–180 (IHMRQTT), 199–203 (DVGGQ), 298–301 (NKKD), and A357. Mg(2+)-binding residues include S47 and T180. Residues 172–180 (DLIHMRQTT) form a G2 motif region. A G3 motif region spans residues 195-204 (IRLIDVGGQK). Positions 294-301 (MLFLNKKD) are G4 motif. The tract at residues 355-360 (TQATVT) is G5 motif.

The protein belongs to the G-alpha family. In terms of assembly, g proteins are composed of 3 units; alpha, beta and gamma. The alpha chain contains the guanine nucleotide binding site.

Guanine nucleotide-binding proteins (G proteins) are involved as modulators or transducers in various transmembrane signaling systems. The sequence is that of Guanine nucleotide-binding protein alpha-5 subunit (gpa-5) from Caenorhabditis elegans.